The chain runs to 617 residues: Electron transfer flavoprotein-ubiquinone oxidoreductase, mitochondrial (617 aa).

A mitochondrion-targeting transit peptide spans 1-33 (MMVPLAKLASPAYQCFHALKIKKNYLPLCATRW). Residue 75-80 (GAGPAG) participates in FAD binding. N6-acetyllysine is present on Lys96. An intramembrane segment occupies 109 to 130 (IGAHTLSGACLDPRAFEELFPD). N6-acetyllysine occurs at positions 132 and 223. Positions 305 and 306 each coordinate a ubiquinone. An N6-acetyllysine modification is found at Lys357. Residues 428 to 447 (IGLHVTEYEDNLKNSWVWKE) lie within the membrane without spanning it. Position 551 is a phosphoserine (Ser551). Residues Cys561, Cys586, Cys589, and Cys592 each coordinate [4Fe-4S] cluster. The 30-residue stretch at 577–606 (FRLQINAQNCVHCKTCDIKDPSQNINWVVP) folds into the 4Fe-4S ferredoxin-type domain.

As to quaternary structure, monomer. It depends on [4Fe-4S] cluster as a cofactor. FAD is required as a cofactor.

Its subcellular location is the mitochondrion inner membrane. The enzyme catalyses a ubiquinone + reduced [electron-transfer flavoprotein] = a ubiquinol + oxidized [electron-transfer flavoprotein] + H(+). Its function is as follows. Accepts electrons from ETF and reduces ubiquinone. This is Electron transfer flavoprotein-ubiquinone oxidoreductase, mitochondrial (ETFDH) from Sus scrofa (Pig).